Consider the following 407-residue polypeptide: Arginine biosynthesis bifunctional protein ArgJ (407 aa).

Residues Thr-169, Lys-192, Thr-203, Glu-283, Asn-402, and Ser-407 each coordinate substrate. The active-site Nucleophile is Thr-203.

Belongs to the ArgJ family. Heterotetramer of two alpha and two beta chains.

It is found in the cytoplasm. The enzyme catalyses N(2)-acetyl-L-ornithine + L-glutamate = N-acetyl-L-glutamate + L-ornithine. It catalyses the reaction L-glutamate + acetyl-CoA = N-acetyl-L-glutamate + CoA + H(+). The protein operates within amino-acid biosynthesis; L-arginine biosynthesis; L-ornithine and N-acetyl-L-glutamate from L-glutamate and N(2)-acetyl-L-ornithine (cyclic): step 1/1. Its pathway is amino-acid biosynthesis; L-arginine biosynthesis; N(2)-acetyl-L-ornithine from L-glutamate: step 1/4. Catalyzes two activities which are involved in the cyclic version of arginine biosynthesis: the synthesis of N-acetylglutamate from glutamate and acetyl-CoA as the acetyl donor, and of ornithine by transacetylation between N(2)-acetylornithine and glutamate. This is Arginine biosynthesis bifunctional protein ArgJ from Mycobacterium leprae (strain TN).